The primary structure comprises 152 residues: Transcriptional repressor NrdR (152 aa).

Residues 3–34 (CPFCGHADTQVVDSRVSEDGASIRRRRRCLEC) fold into a zinc finger. An ATP-cone domain is found at 49 to 139 (PQVVKQDGHR…VYRSFQDVAE (91 aa)).

This sequence belongs to the NrdR family. Zn(2+) serves as cofactor.

Negatively regulates transcription of bacterial ribonucleotide reductase nrd genes and operons by binding to NrdR-boxes. The polypeptide is Transcriptional repressor NrdR (Laribacter hongkongensis (strain HLHK9)).